The chain runs to 195 residues: Thymidine kinase (195 aa).

ATP is bound by residues 15 to 22 (GSMFSGKT) and 91 to 94 (DEAN). Residue Glu92 is the Proton acceptor of the active site. 4 residues coordinate Zn(2+): Cys148, Cys151, Cys186, and Cys189.

It belongs to the thymidine kinase family. As to quaternary structure, homotetramer.

The protein localises to the cytoplasm. It carries out the reaction thymidine + ATP = dTMP + ADP + H(+). This chain is Thymidine kinase, found in Halobacterium salinarum (strain ATCC 29341 / DSM 671 / R1).